The chain runs to 164 residues: Putative pre-16S rRNA nuclease (164 aa).

Belongs to the YqgF nuclease family.

The protein localises to the cytoplasm. Functionally, could be a nuclease involved in processing of the 5'-end of pre-16S rRNA. In Caulobacter sp. (strain K31), this protein is Putative pre-16S rRNA nuclease.